The chain runs to 419 residues: 3-isopropylmalate dehydratase large subunit (419 aa).

[4Fe-4S] cluster is bound by residues cysteine 300, cysteine 360, and cysteine 363.

It belongs to the aconitase/IPM isomerase family. LeuC type 2 subfamily. As to quaternary structure, heterodimer of LeuC and LeuD. The cofactor is [4Fe-4S] cluster.

It carries out the reaction (2R,3S)-3-isopropylmalate = (2S)-2-isopropylmalate. It participates in amino-acid biosynthesis; L-leucine biosynthesis; L-leucine from 3-methyl-2-oxobutanoate: step 2/4. In terms of biological role, catalyzes the isomerization between 2-isopropylmalate and 3-isopropylmalate, via the formation of 2-isopropylmaleate. This Clostridium botulinum (strain Alaska E43 / Type E3) protein is 3-isopropylmalate dehydratase large subunit.